We begin with the raw amino-acid sequence, 448 residues long: Adenylosuccinate synthetase (448 aa).

GTP is bound by residues 22-28 (GDEGKGK) and 50-52 (GHT). Asp-23 serves as the catalytic Proton acceptor. Positions 23 and 50 each coordinate Mg(2+). Residues 23 to 26 (DEGK), 48 to 51 (NAGH), Thr-139, Arg-153, Gln-234, Thr-249, and Arg-321 each bind IMP. Catalysis depends on His-51, which acts as the Proton donor. 317–323 (SVTGRPR) serves as a coordination point for substrate. GTP contacts are provided by residues Arg-323, 349–351 (KLD), and 431–433 (STG).

The protein belongs to the adenylosuccinate synthetase family. As to quaternary structure, homodimer. The cofactor is Mg(2+).

Its subcellular location is the cytoplasm. It carries out the reaction IMP + L-aspartate + GTP = N(6)-(1,2-dicarboxyethyl)-AMP + GDP + phosphate + 2 H(+). It functions in the pathway purine metabolism; AMP biosynthesis via de novo pathway; AMP from IMP: step 1/2. Its function is as follows. Plays an important role in the de novo pathway of purine nucleotide biosynthesis. Catalyzes the first committed step in the biosynthesis of AMP from IMP. The sequence is that of Adenylosuccinate synthetase from Paraburkholderia phytofirmans (strain DSM 17436 / LMG 22146 / PsJN) (Burkholderia phytofirmans).